Here is a 370-residue protein sequence, read N- to C-terminus: Peptide chain release factor 2 (370 aa).

Gln-249 carries the post-translational modification N5-methylglutamine.

It belongs to the prokaryotic/mitochondrial release factor family. In terms of processing, methylated by PrmC. Methylation increases the termination efficiency of RF2.

The protein localises to the cytoplasm. Peptide chain release factor 2 directs the termination of translation in response to the peptide chain termination codons UGA and UAA. The polypeptide is Peptide chain release factor 2 (Kosmotoga olearia (strain ATCC BAA-1733 / DSM 21960 / TBF 19.5.1)).